Consider the following 566-residue polypeptide: Putative sensory transducer protein YvaQ (566 aa).

The N-terminal stretch at 1 to 31 (MRLTISRKFSLVFLTLILINLLVGGIGVLNM) is a signal peptide. The stretch at 74 to 110 (DKSKMDTLDQEMNQIMEDINQKLDNYEKTISTDKEQK) forms a coiled coil. Residues 186–206 (IYTALLVAASILISIFIWLYI) traverse the membrane as a helical segment. Residues 208 to 261 (RNIVKPIIRMKESANHIAEGDLSNDMEALNSKDELGDLNEALQKMVGNLRDIVG) enclose the HAMP domain. Residues 280–530 (ATNETRSGSK…ESAAGIEETF (251 aa)) form the Methyl-accepting transducer domain. The stretch at 536–566 (SAHSMDQVLLNAEELEQLANELNEKMGQFTI) forms a coiled coil.

Belongs to the methyl-accepting chemotaxis (MCP) protein family.

Its subcellular location is the cell membrane. Chemotactic-signal transducers respond to changes in the concentration of attractants and repellents in the environment, transduce a signal from the outside to the inside of the cell, and facilitate sensory adaptation through the variation of the level of methylation. Attractants increase the level of methylation while repellents decrease the level of methylation. The chain is Putative sensory transducer protein YvaQ (yvaQ) from Bacillus subtilis (strain 168).